Consider the following 271-residue polypeptide: Solute carrier family 66 member 2 (271 aa).

A run of 3 helical transmembrane segments spans residues 7–27, 49–69, and 72–92; these read GWLL…AMVF, FSTH…LFWF, and HFES…LLML. One can recognise a PQ-loop 1 domain in the interval 14–80; it reads HQLVSWVAAG…RHFESPLLWQ (67 aa). Residue S110 is modified to Phosphoserine. A run of 3 helical transmembrane segments spans residues 143 to 163, 168 to 188, and 232 to 252; these read FADY…ITYL, ALFV…LGVP, and VCGL…YAFA. Residues 149 to 215 enclose the PQ-loop 2 domain; the sequence is CVLAFTGVAG…MVLMWTSGDT (67 aa).

The protein localises to the membrane. This is Solute carrier family 66 member 2 (Slc66a2) from Rattus norvegicus (Rat).